A 169-amino-acid chain; its full sequence is MDDLPLNVGLPIIGVMLVLIVAILCYLAYHWHDTFKLVRMFLSYRWLIRCCELYGEYERRFADLSSLGLGAVRRESDRRYRFSERPDEILVRWEEVSSQCSYASSRITDRRAGSSSSSSVHVANQRNSVPPPDMAVTAPLTDVDLLKPVTGSATQFTTVAMVHYHQEYT.

A helical membrane pass occupies residues 8–28; sequence VGLPIIGVMLVLIVAILCYLA. The tract at residues 109–133 is disordered; the sequence is DRRAGSSSSSSVHVANQRNSVPPPD.

In terms of assembly, interacts with host TNFR1. Interacts with host MRP1. Interacts with host UAF1/WDR48. Interacts with host STING1.

It is found in the host Golgi apparatus membrane. Its function is as follows. Plays an important role in the establishment of latent viral infection. Modulates the expression of several host cell surface receptors such as TNFR1, CD36 or the MRP1 transporter during productive infection. For instance, associates with host MRP1 and induces its lysosomal degradation. Plays an inhibitory role in the host cGAS/STING/TBK1 pathway and upstream of IRF3 phosphorylation and NF-kappa-B leading to inhibition of interferon beta production during both lytic and latent infections. Also participates in the establishment of latency by sustaining an innate immune response through phosphorylation and activation of host STAT1. This Human cytomegalovirus (strain Merlin) (HHV-5) protein is Protein UL138 (UL138).